The primary structure comprises 515 residues: Integrator complex subunit 14 (515 aa).

Positions 2–204 constitute a VWFA domain; the sequence is PTVVVMDVSL…KNVQSMFGKL (203 aa). Residues S10, S12, and T86 each coordinate Mg(2+). K418 is modified (N6-acetyllysine).

It belongs to the Integrator subunit 14 family. Component of the Integrator complex, composed of core subunits INTS1, INTS2, INTS3, INTS4, INTS5, INTS6, INTS7, INTS8, INTS9/RC74, INTS10, INTS11/CPSF3L, INTS12, INTS13, INTS14 and INTS15. The core complex associates with protein phosphatase 2A subunits PPP2CA and PPP2R1A, to form the Integrator-PP2A (INTAC) complex. INTS14 is part of the tail subcomplex, composed of INTS10, INTS13, INTS14 and INTS15.

It is found in the nucleus. In terms of biological role, component of the integrator complex, a multiprotein complex that terminates RNA polymerase II (Pol II) transcription in the promoter-proximal region of genes. The integrator complex provides a quality checkpoint during transcription elongation by driving premature transcription termination of transcripts that are unfavorably configured for transcriptional elongation: the complex terminates transcription by (1) catalyzing dephosphorylation of the C-terminal domain (CTD) of Pol II subunit POLR2A/RPB1 and SUPT5H/SPT5, (2) degrading the exiting nascent RNA transcript via endonuclease activity and (3) promoting the release of Pol II from bound DNA. The integrator complex is also involved in terminating the synthesis of non-coding Pol II transcripts, such as enhancer RNAs (eRNAs), small nuclear RNAs (snRNAs), telomerase RNAs and long non-coding RNAs (lncRNAs). Within the integrator complex, INTS14 is part of the integrator tail module that acts as a platform for the recruitment of transcription factors at promoters. This chain is Integrator complex subunit 14, found in Rattus norvegicus (Rat).